We begin with the raw amino-acid sequence, 210 residues long: Ribonuclease HII (210 aa).

In terms of domain architecture, RNase H type-2 spans 17–206; it reads DIICGVDEAG…VRALLGGVTP (190 aa). Residues Asp-23, Glu-24, and Asp-115 each coordinate a divalent metal cation.

It belongs to the RNase HII family. The cofactor is Mn(2+). Mg(2+) is required as a cofactor.

It is found in the cytoplasm. It carries out the reaction Endonucleolytic cleavage to 5'-phosphomonoester.. Endonuclease that specifically degrades the RNA of RNA-DNA hybrids. This chain is Ribonuclease HII, found in Janthinobacterium sp. (strain Marseille) (Minibacterium massiliensis).